Here is a 416-residue protein sequence, read N- to C-terminus: Notoamide biosynthesis cluster protein N' (416 aa).

Residues 1 to 16 (MRAALLTLAFTALAAA) form the signal peptide. 2 N-linked (GlcNAc...) asparagine glycosylation sites follow: Asn-119 and Asn-262.

Functionally, part of the gene cluster that mediates the biosynthesis of notoamide, a fungal indole alkaloid that belongs to a family of natural products containing a characteristic bicyclo[2.2.2]diazaoctane core. The first step of notoamide biosynthesis involves coupling of L-proline and L-tryptophan by the bimodular NRPS notE', to produce cyclo-L-tryptophan-L-proline called brevianamide F. The reverse prenyltransferase notF' then acts as a deoxybrevianamide E synthase and converts brevianamide F to deoxybrevianamide E via reverse prenylation at C-2 of the indole ring leading to the bicyclo[2.2.2]diazaoctane core. Deoxybrevianamide E is further hydroxylated at C-6 of the indole ring, likely catalyzed by the cytochrome P450 monooxygenase notG', to yield 6-hydroxy-deoxybrevianamide E. 6-hydroxy-deoxybrevianamide E is a specific substrate of the prenyltransferase notC' for normal prenylation at C-7 to produce 6-hydroxy-7-prenyl-deoxybrevianamide, also called notoamide S. As the proposed pivotal branching point in notoamide biosynthesis, notoamide S can be diverted to notoamide E through an oxidative pyran ring closure putatively catalyzed by either notH' cytochrome P450 monooxygenase or the notD' FAD-linked oxidoreductase. This step would be followed by an indole 2,3-epoxidation-initiated pinacol-like rearrangement catalyzed by the notB' FAD-dependent monooxygenase leading to the formation of notoamide C and notoamide D. On the other hand notoamide S is converted to notoamide T by notH' (or notD'), a bifunctional oxidase that also functions as the intramolecular Diels-Alderase responsible for generation of (-)-notoamide T. To generate antipodal (+)-notoaminide T, notH (or notD) in Aspergillus strain MF297-2 is expected to catalyze a Diels-Alder reaction leading to the opposite stereochemistry. The remaining oxidoreductase notD' (or notH') likely catalyzes the oxidative pyran ring formation to yield (-)-stephacidin A. The FAD-dependent monooxygenase notI' is highly similar to notB' and is predicted to catalyze a similar conversion from (-)-stephacidin A to (+)-notoamide B via the 2,3-epoxidation of (-)-stephacidin A followed by a pinacol-type rearrangement. Finally, it remains unclear which enzyme could be responsible for the final hydroxylation steps leading to notoamide A and sclerotiamide. The function of notN' in the notoamide biosynthesis has not been determined yet. The polypeptide is Notoamide biosynthesis cluster protein N' (Aspergillus versicolor).